We begin with the raw amino-acid sequence, 412 residues long: Orcinol synthase (412 aa).

Catalysis depends on residues Cys-164, His-322, and Asn-355.

The protein belongs to the thiolase-like superfamily. Chalcone/stilbene synthases family. Homodimer. Mainly expressed in young leaves, and barely in mature leaves and twigs.

It carries out the reaction 3 malonyl-CoA + acetyl-CoA + 3 H(+) = orcinol + 4 CO2 + 4 CoA. It catalyses the reaction 3 malonyl-CoA + acetyl-CoA + 2 H(+) = orsellinate + 3 CO2 + 4 CoA. The catalysed reaction is 3 malonyl-CoA + acetyl-CoA + 3 H(+) = tetraacetate lactone + 3 CO2 + 4 CoA. The enzyme catalyses 2 malonyl-CoA + acetyl-CoA + 2 H(+) = triacetate lactone + 2 CO2 + 3 CoA. It carries out the reaction 3 malonyl-CoA + acetyl-CoA + 3 H(+) = 2-acetylphloroglucinol + 3 CO2 + 4 CoA. The protein operates within secondary metabolite biosynthesis; terpenoid biosynthesis. Functionally, involved in the biosynthesis of acetate-derived aromatic tetraketides natural products, precursors of daurichromenic acid, an anti-human immunodeficiency viruses (HIV) meroterpenoid consisting of sesquiterpene and orsellinic acid (OSA) moieties. Accepts acetyl-CoA as starter substrate and produces orcinol as the major reaction product, along with four minor products including OSA, tetraacetate lactone, triacetate lactone and 2-acetylphloroglucinol. This Rhododendron dauricum (Azalea daurica) protein is Orcinol synthase.